The sequence spans 360 residues: Probable L-asparaginase 3 (360 aa).

Positions 1–16 (MWSSIISFLFFSVALC) are cleaved as a signal peptide. N-linked (GlcNAc...) asparagine glycans are attached at residues Asn-27, Asn-35, and Asn-40. The 321-residue stretch at 39-359 (PNVTIFAMGG…QNITDIFSLE (321 aa)) folds into the Asparaginase/glutaminase domain. Thr-49 acts as the O-isoaspartyl threonine intermediate in catalysis. Asn-82 carries N-linked (GlcNAc...) asparagine glycosylation. Ser-96 is a substrate binding site. Asn-106 carries N-linked (GlcNAc...) asparagine glycosylation. 129 to 130 (TD) contacts substrate. N-linked (GlcNAc...) asparagine glycosylation is found at Asn-144, Asn-179, Asn-246, Asn-302, and Asn-351.

It belongs to the asparaginase 1 family.

The protein resides in the secreted. The protein localises to the cell wall. The enzyme catalyses L-asparagine + H2O = L-aspartate + NH4(+). This Schizosaccharomyces pombe (strain 972 / ATCC 24843) (Fission yeast) protein is Probable L-asparaginase 3.